Here is a 309-residue protein sequence, read N- to C-terminus: tRNA dimethylallyltransferase (309 aa).

An ATP-binding site is contributed by 13-20; that stretch reads GPTAVGKS. 15 to 20 lines the substrate pocket; the sequence is TAVGKS.

It belongs to the IPP transferase family. As to quaternary structure, monomer. Mg(2+) serves as cofactor.

The catalysed reaction is adenosine(37) in tRNA + dimethylallyl diphosphate = N(6)-dimethylallyladenosine(37) in tRNA + diphosphate. Functionally, catalyzes the transfer of a dimethylallyl group onto the adenine at position 37 in tRNAs that read codons beginning with uridine, leading to the formation of N6-(dimethylallyl)adenosine (i(6)A). The sequence is that of tRNA dimethylallyltransferase from Lacticaseibacillus paracasei (strain ATCC 334 / BCRC 17002 / CCUG 31169 / CIP 107868 / KCTC 3260 / NRRL B-441) (Lactobacillus paracasei).